A 296-amino-acid polypeptide reads, in one-letter code: 4-hydroxybenzoate octaprenyltransferase (296 aa).

The next 8 membrane-spanning stretches (helical) occupy residues Pro-28–Gly-48, Leu-52–Ile-72, Ala-102–Ser-122, Thr-145–Ala-167, Ser-174–Val-196, Met-219–Phe-239, Leu-241–Trp-261, and Phe-275–Leu-295.

Belongs to the UbiA prenyltransferase family. Mg(2+) serves as cofactor.

The protein localises to the cell inner membrane. It carries out the reaction all-trans-octaprenyl diphosphate + 4-hydroxybenzoate = 4-hydroxy-3-(all-trans-octaprenyl)benzoate + diphosphate. The protein operates within cofactor biosynthesis; ubiquinone biosynthesis. Its function is as follows. Catalyzes the prenylation of para-hydroxybenzoate (PHB) with an all-trans polyprenyl group. Mediates the second step in the final reaction sequence of ubiquinone-8 (UQ-8) biosynthesis, which is the condensation of the polyisoprenoid side chain with PHB, generating the first membrane-bound Q intermediate 3-octaprenyl-4-hydroxybenzoate. In Pseudomonas putida (strain W619), this protein is 4-hydroxybenzoate octaprenyltransferase.